Consider the following 424-residue polypeptide: Glycerol-3-phosphate dehydrogenase [NAD(+)] (424 aa).

NAD(+) contacts are provided by residues 79–84, F111, and F167; that span reads GSGNWG. K190 provides a ligand contact to substrate. A223 contacts NAD(+). K283 acts as the Proton acceptor in catalysis. R348 and Q377 together coordinate NAD(+). Position 348-349 (348-349) interacts with substrate; it reads RN.

This sequence belongs to the NAD-dependent glycerol-3-phosphate dehydrogenase family.

The catalysed reaction is sn-glycerol 3-phosphate + NAD(+) = dihydroxyacetone phosphate + NADH + H(+). This is Glycerol-3-phosphate dehydrogenase [NAD(+)] (GPD) from Eremothecium gossypii (strain ATCC 10895 / CBS 109.51 / FGSC 9923 / NRRL Y-1056) (Yeast).